The primary structure comprises 273 residues: 4-hydroxy-tetrahydrodipicolinate reductase (273 aa).

Residues 8–13 (GACGRM), Glu34, 102–104 (GTT), and 128–131 (APNM) contribute to the NAD(+) site. His160 (proton donor/acceptor) is an active-site residue. His161 provides a ligand contact to (S)-2,3,4,5-tetrahydrodipicolinate. The active-site Proton donor is Lys164. 170–171 (GT) provides a ligand contact to (S)-2,3,4,5-tetrahydrodipicolinate.

The protein belongs to the DapB family.

It localises to the cytoplasm. It catalyses the reaction (S)-2,3,4,5-tetrahydrodipicolinate + NAD(+) + H2O = (2S,4S)-4-hydroxy-2,3,4,5-tetrahydrodipicolinate + NADH + H(+). It carries out the reaction (S)-2,3,4,5-tetrahydrodipicolinate + NADP(+) + H2O = (2S,4S)-4-hydroxy-2,3,4,5-tetrahydrodipicolinate + NADPH + H(+). It functions in the pathway amino-acid biosynthesis; L-lysine biosynthesis via DAP pathway; (S)-tetrahydrodipicolinate from L-aspartate: step 4/4. Catalyzes the conversion of 4-hydroxy-tetrahydrodipicolinate (HTPA) to tetrahydrodipicolinate. The sequence is that of 4-hydroxy-tetrahydrodipicolinate reductase from Methanothermobacter thermautotrophicus (strain ATCC 29096 / DSM 1053 / JCM 10044 / NBRC 100330 / Delta H) (Methanobacterium thermoautotrophicum).